The primary structure comprises 1117 residues: Cytospin-A (1117 aa).

Disordered stretches follow at residues M1 to S176, S293 to E323, and S358 to E390. Over residues T45–A90 the composition is skewed to low complexity. Residues T93–K117 show a composition bias toward polar residues. Composition is skewed to basic and acidic residues over residues S120 to R131 and T158 to S171. The stretch at K168 to Q280 forms a coiled coil. Positions S293 to Q303 are enriched in polar residues. Positions S358–I377 are enriched in low complexity. Phosphoserine occurs at positions 384, 385, and 389. Coiled-coil stretches lie at residues A394–L449 and R487–V807. 3 positions are modified to phosphoserine: S868, S881, and S887. The segment at R919–P1001 is disordered. A compositionally biased stretch (basic and acidic residues) spans R946–S956. A compositionally biased stretch (low complexity) spans T971–T990. A Calponin-homology (CH) domain is found at G1011–E1116.

It belongs to the cytospin-A family. In terms of assembly, may interact with both microtubules and actin cytoskeleton.

The protein localises to the cytoplasm. It localises to the cytoskeleton. Its subcellular location is the spindle. The protein resides in the cell junction. It is found in the gap junction. Involved in cytokinesis and spindle organization. May play a role in actin cytoskeleton organization and microtubule stabilization and hence required for proper cell adhesion and migration. The polypeptide is Cytospin-A (SPECC1L) (Pan troglodytes (Chimpanzee)).